Reading from the N-terminus, the 426-residue chain is NADH-quinone oxidoreductase subunit F (426 aa).

Glycine 65 to glycine 74 contributes to the NAD(+) binding site. Glycine 176–threonine 223 contributes to the FMN binding site. Residues cysteine 347, cysteine 350, cysteine 353, and cysteine 393 each contribute to the [4Fe-4S] cluster site.

This sequence belongs to the complex I 51 kDa subunit family. FMN serves as cofactor. The cofactor is [4Fe-4S] cluster.

The enzyme catalyses a quinone + NADH + 5 H(+)(in) = a quinol + NAD(+) + 4 H(+)(out). In terms of biological role, NDH-1 shuttles electrons from NADH, via FMN and iron-sulfur (Fe-S) centers, to quinones in the respiratory chain. Couples the redox reaction to proton translocation (for every two electrons transferred, four hydrogen ions are translocated across the cytoplasmic membrane), and thus conserves the redox energy in a proton gradient. The sequence is that of NADH-quinone oxidoreductase subunit F (nuoF) from Aquifex aeolicus (strain VF5).